The sequence spans 422 residues: GTPase Obg (422 aa).

In terms of domain architecture, Obg spans 1 to 156 (MKFIDEVNVL…FALRLVLKVL (156 aa)). Residues 157-324 (ADVGLVGKPS…LKAAIFKMLE (168 aa)) enclose the OBG-type G domain. Residues 163–170 (GKPSAGKS), 188–192 (FTTLV), 209–212 (DLPG), 278–281 (NKSD), and 305–307 (SAL) contribute to the GTP site. Residues Ser170 and Thr190 each contribute to the Mg(2+) site. The OCT domain maps to 342 to 420 (NITLDRDALK…IGNFEFDWSD (79 aa)).

This sequence belongs to the TRAFAC class OBG-HflX-like GTPase superfamily. OBG GTPase family. Monomer. Requires Mg(2+) as cofactor.

The protein localises to the cytoplasm. An essential GTPase which binds GTP, GDP and possibly (p)ppGpp with moderate affinity, with high nucleotide exchange rates and a fairly low GTP hydrolysis rate. Plays a role in control of the cell cycle, stress response, ribosome biogenesis and in those bacteria that undergo differentiation, in morphogenesis control. The protein is GTPase Obg of Metamycoplasma arthritidis (strain 158L3-1) (Mycoplasma arthritidis).